We begin with the raw amino-acid sequence, 424 residues long: Inhibin beta A chain (424 aa).

An N-terminal signal peptide occupies residues 1–20; sequence MPLLWLRGFLLASCWIIVRS. A propeptide spanning residues 21 to 308 is cleaved from the precursor; that stretch reads SPTPGSEGPG…EDHPHRRRRR (288 aa). Asparagine 165 carries an N-linked (GlcNAc...) asparagine glycan. Positions 257 to 288 are disordered; it reads KKKKKEEEGEGKKKDGGDGGAGADEDKEQSHR. Residues 261-273 are compositionally biased toward basic and acidic residues; the sequence is KEEEGEGKKKDGG. Disulfide bonds link cysteine 312/cysteine 320, cysteine 319/cysteine 389, cysteine 348/cysteine 421, and cysteine 352/cysteine 423.

Belongs to the TGF-beta family. In terms of assembly, dimeric, linked by one or more disulfide bonds. Inhibin A is a dimer of alpha/INHA and beta-A/INHBA. Activin A is a homodimer of beta-A/INHBA. Activin AB is a dimer of beta-A/INHBA and beta-B/INHBB. Interacts with FST and FSTL3; these interactions prevent activin A interaction to its type II receptor. Activin A interacts with ACVR2A. Activin A interacts with BMPR2. Inhibin A interacts with ACVR1; this interaction creates a non-signaling complex (NSC) that inhibits ACVR1-mediated BMP signaling. Inhibin A interacts with ACVR2A.

It is found in the secreted. In terms of biological role, inhibins/activins are involved in regulating a number of diverse functions such as hypothalamic and pituitary hormone secretion, gonadal hormone secretion, germ cell development and maturation, erythroid differentiation, insulin secretion, nerve cell survival, embryonic axial development or bone growth, depending on their subunit composition. Functionally, activin A is a homodimer of INHBA that plays a role in several essential biological processes including embryonic development, stem cell maintenance and differentiation, haematopoiesis, cell proliferation and tissue fibrosis. Signals through type I (such as ACVR1B or ACVR1C) and type II receptors (such as ACVR2A, ACVR2B or BMPR2) which, upon ligand binding, phosphorylate SMAD2 and SMAD3 intracellular signaling mediators that form a complex with SMAD4, translocate to the nucleus and modulate gene expression. Can also activate alternative non-canonical intracellular signaling pathways including the p38 MAPK, extracellular signal-regulated kinases 1/2 (ERK1/2) and c-Jun N-terminal kinases (JNKs) to modulate cell migration and differentiation. Alternatively, promotes osteoblastic differentiation via ACVRL1-SMAD1/5/9 pathway. In addition, can engage the type I receptor ACVR1 to form an ACVR1-activin A-type II receptor non-signaling complex (NSC) that renders receptors unavailable for engagement with BMPs, hence resulting in an apparent inhibition of ACVR1-mediated BMP signaling. Inhibin A is a dimer of alpha/INHA and beta-A/INHBA that functions as a feedback regulator in the hypothalamic-pituitary-gonadal (HPG) axis. Inhibits the secretion of FSH from the anterior pituitary gland by acting on pituitary gonadotrope cells. Antagonizes activin A by binding to the proteoglycan, betaglycan, and forming a stable complex with and, thereby, sequestering type II activin receptors while excluding type I receptor. This Felis catus (Cat) protein is Inhibin beta A chain (INHBA).